The chain runs to 251 residues: CDP-diacylglycerol pyrophosphatase (251 aa).

The helical transmembrane segment at Ala4 to Trp24 threads the bilayer.

This sequence belongs to the Cdh family.

Its subcellular location is the cell inner membrane. It carries out the reaction a CDP-1,2-diacyl-sn-glycerol + H2O = a 1,2-diacyl-sn-glycero-3-phosphate + CMP + 2 H(+). Its pathway is phospholipid metabolism; CDP-diacylglycerol degradation; phosphatidate from CDP-diacylglycerol: step 1/1. The polypeptide is CDP-diacylglycerol pyrophosphatase (Escherichia coli O9:H4 (strain HS)).